The chain runs to 60 residues: UPF0434 protein ETA_21370 (60 aa).

This sequence belongs to the UPF0434 family.

In Erwinia tasmaniensis (strain DSM 17950 / CFBP 7177 / CIP 109463 / NCPPB 4357 / Et1/99), this protein is UPF0434 protein ETA_21370.